The primary structure comprises 1009 residues: Glutamate receptor ionotropic, delta-2 (1009 aa).

The N-terminal stretch at Met1–Pro23 is a signal peptide. The Extracellular portion of the chain corresponds to Asp24–Asp566. N-linked (GlcNAc...) asparagine glycans are attached at residues Asn293, Asn306, Asn390, and Asn426. Residues Glu531, Val534, and Asp535 each contribute to the Ca(2+) site. Residues Leu567–Leu587 traverse the membrane as a helical segment. The Cytoplasmic segment spans residues Asn588 to Gly635. Residues Val636–Leu656 form a helical membrane-spanning segment. The Extracellular portion of the chain corresponds to Thr657–Ser830. Asn713 is a glycosylation site (N-linked (GlcNAc...) asparagine). Ca(2+) contacts are provided by Asp753, Asp755, and Ser757. Residues Phe831–Val851 form a helical membrane-spanning segment. Residues Glu852–Ile1009 lie on the Cytoplasmic side of the membrane. Positions Tyr989–Ile1009 are disordered.

This sequence belongs to the glutamate-gated ion channel (TC 1.A.10.1) family. GRID2 subfamily. Tetramer; dimer of dimers. Expressed in cerebellar Purkinje cells, in crest cells in the medial octavolateral nucleus and in type I neurons of the optic tectum.

It is found in the postsynaptic cell membrane. The catalysed reaction is Ca(2+)(in) = Ca(2+)(out). It carries out the reaction Na(+)(in) = Na(+)(out). Member of the ionotropic glutamate receptor family, which plays a crucial role in synaptic organization and signal transduction in the central nervous system. Although it shares structural features with ionotropic glutamate receptors, does not bind glutamate as a primary ligand. Promotes synaptogenesis and mediates the D-Serine-dependent long term depression signals and AMPA receptor endocytosis of cerebellar parallel fiber-Purkinje cell (PF-PC) synapses through the NRX1B-CBLN1-GRID2 triad complex. In the presence of neurexins and cerebellins, forms cation-selective channels that are proposed to be gated by glycine and D-serine. However, recent research disputes this ligand-gated cation channel activity. Cation-selective ion channel activity can be triggered by GRM1 in Purkinje cells. This chain is Glutamate receptor ionotropic, delta-2, found in Danio rerio (Zebrafish).